The sequence spans 858 residues: MPSALAIFTCRPNSHPFQERHVYLDEPIKIGRSVARCRPAQNNATFDCKVLSRNHALVWFDHKTSKFYLQDTKSSNGTFINSQRLSRGSEESPPCEILSGDIIQFGVDVTENTRKVVTHGCIVSTIKLFLPDGMEARLRSDDVIHAPLPSPVDKVAANTPSMYSQELFQLSQYLQEALHREQMLEQKLATLQRLLAITQEASDTSWQALIDEDRLLSRLEVMGNQLQACSKNQTEDSLRKELVALQEDKHSYETTAKESLRRVLQEKIEVVRKLSEVERSLSNTEDECTHLREMNERTQEELRELANKYNGAVNEIKDLSDKLKAAEGKQEEIQQKGQAEKKELQAKIDDMEEKEQELQAKIEALQADNDFTNERLTALQVVRLEPLQEKTLKECSSLGGIQVDDFLPKINGSTEKEERLLSKSGGDCTFIHQFIECQKKKLMVQGHLTKVVEESKLSKEENQAKAKESDLSDTLSPSKEKSSDDTTDDAQMDEQDLNEPLAKVSLLKDDDLQGTQAETEAKQDTQHLRKELVEAQELARASKQKCFDLQAALLEEERKAYRNQVEESAKQIQVLQVVQLQRLHMDMENLQEEKDTEISSTRDKLLSAQDEILLLHQAAAKAVSERDTDFMSLQEELKKVRAELEGWRKAASEYEEEIRSLQSTFQLRCQQCEVQQREEATRLQGGELEKLKKEWDVLENECRSLKKENVLLSSELQRQEKELHNNSQKQSLELTSDLSILQMTRKELENQMGSLKEQHLRDEADLKTLLSKAENQAKDVQKEYEKTQTVLSELKLKFEMTEQEKQSITDELKQCKDNLKLLREKGNNKPWPWMPMVAALVAVTAMVLYVPGLARASP.

The interval 1–165 (MPSALAIFTC…AANTPSMYSQ (165 aa)) is necessary for targeting to centrosomes. Over 1–832 (MPSALAIFTC…REKGNNKPWP (832 aa)) the chain is Cytoplasmic. In terms of domain architecture, FHA spans 28 to 85 (IKIGRSVARCRPAQNNATFDCKVLSRNHALVWFDHKTSKFYLQDTKSSNGTFINSQRL). Ser150 bears the Phosphoserine mark. 2 coiled-coil regions span residues 169-204 (QLSQYLQEALHREQMLEQKLATLQRLLAITQEASDT) and 232-381 (NQTE…ALQV). The span at 456-470 (KLSKEENQAKAKESD) shows a compositional bias: basic and acidic residues. The tract at residues 456–492 (KLSKEENQAKAKESDLSDTLSPSKEKSSDDTTDDAQM) is disordered. 2 positions are modified to phosphoserine: Ser472 and Ser476. Residues 516-829 (QAETEAKQDT…KLLREKGNNK (314 aa)) adopt a coiled-coil conformation. The helical; Anchor for type IV membrane protein transmembrane segment at 833–853 (WMPMVAALVAVTAMVLYVPGL) threads the bilayer. At 854 to 858 (ARASP) the chain is on the extracellular side.

It belongs to the SLMAP family. In terms of assembly, homodimer. Interacts with myosin. Interacts with SIKE1 and both associate with the STRIPAK core complex composed of PP2A catalytic and scaffolding subunits, the striatins (PP2A regulatory subunits), the striatin-associated proteins MOB4, STRIP1 and STRIP2, PDCD10 and members of the STE20 kinases, such as STK24 and STK26. Interacts (via FHA domain) with STK3 (when phosphorylated); the interaction associates STK3 with the STRIPAK complex.

Its subcellular location is the cell membrane. The protein resides in the sarcolemma. It is found in the cytoplasm. The protein localises to the cytoskeleton. It localises to the microtubule organizing center. Its subcellular location is the centrosome. The protein resides in the endoplasmic reticulum membrane. It is found in the mitochondrion membrane. Functionally, associates with the striatin-interacting phosphatase and kinase (STRIPAK) core complex, forming the extended (SIKE1:SLMAP)STRIPAK complex. The (SIKE1:SLMAP)STRIPAK complex dephosphorylates STK3 leading to the inhibition of Hippo signaling and the control of cell growth. May play a role during myoblast fusion. The polypeptide is Sarcolemmal membrane-associated protein (Slmap) (Rattus norvegicus (Rat)).